The chain runs to 380 residues: Queuine tRNA-ribosyltransferase (380 aa).

The Proton acceptor role is filled by D96. Substrate contacts are provided by residues 96–100 (DSGGF), D150, Q193, and G220. Residues 251–257 (GVGAPDS) are RNA binding. Catalysis depends on D270, which acts as the Nucleophile. The tract at residues 275–279 (TRIAR) is RNA binding; important for wobble base 34 recognition. 4 residues coordinate Zn(2+): C308, C310, C313, and H339.

The protein belongs to the queuine tRNA-ribosyltransferase family. As to quaternary structure, homodimer. Within each dimer, one monomer is responsible for RNA recognition and catalysis, while the other monomer binds to the replacement base PreQ1. The cofactor is Zn(2+).

The catalysed reaction is 7-aminomethyl-7-carbaguanine + guanosine(34) in tRNA = 7-aminomethyl-7-carbaguanosine(34) in tRNA + guanine. The protein operates within tRNA modification; tRNA-queuosine biosynthesis. In terms of biological role, catalyzes the base-exchange of a guanine (G) residue with the queuine precursor 7-aminomethyl-7-deazaguanine (PreQ1) at position 34 (anticodon wobble position) in tRNAs with GU(N) anticodons (tRNA-Asp, -Asn, -His and -Tyr). Catalysis occurs through a double-displacement mechanism. The nucleophile active site attacks the C1' of nucleotide 34 to detach the guanine base from the RNA, forming a covalent enzyme-RNA intermediate. The proton acceptor active site deprotonates the incoming PreQ1, allowing a nucleophilic attack on the C1' of the ribose to form the product. After dissociation, two additional enzymatic reactions on the tRNA convert PreQ1 to queuine (Q), resulting in the hypermodified nucleoside queuosine (7-(((4,5-cis-dihydroxy-2-cyclopenten-1-yl)amino)methyl)-7-deazaguanosine). In Streptococcus pneumoniae (strain Hungary19A-6), this protein is Queuine tRNA-ribosyltransferase.